Consider the following 233-residue polypeptide: C-type lectin domain-containing protein 87 (233 aa).

The signal sequence occupies residues 1–19 (MRFCLLVAFILPGLFLVHA). S31 carries an O-linked (Xyl...) (chondroitin sulfate) serine glycan. An N-linked (GlcNAc...) asparagine glycan is attached at N81. Positions 93–223 (FADSCYWIEK…CTYMLYSICE (131 aa)) constitute a C-type lectin domain. 2 cysteine pairs are disulfide-bonded: C114/C222 and C193/C214. N-linked (GlcNAc...) asparagine glycosylation occurs at N225.

The chain is C-type lectin domain-containing protein 87 from Caenorhabditis elegans.